The primary structure comprises 152 residues: Superoxide dismutase [Cu-Zn] (152 aa).

Residues His44, His46, and His61 each coordinate Cu cation. Zn(2+) is bound by residues His61, His69, His78, and Asp81. His118 serves as a coordination point for Cu cation.

It belongs to the Cu-Zn superoxide dismutase family. As to quaternary structure, homodimer. The cofactor is Cu cation. Zn(2+) is required as a cofactor.

Its subcellular location is the cytoplasm. It carries out the reaction 2 superoxide + 2 H(+) = H2O2 + O2. Its function is as follows. Destroys radicals which are normally produced within the cells and which are toxic to biological systems. This is Superoxide dismutase [Cu-Zn] from Drosophila pseudoobscura pseudoobscura (Fruit fly).